Reading from the N-terminus, the 169-residue chain is Transcription antitermination protein NusB (169 aa).

Positions 1-19 (MAEMKKTIDNKPAPKGEKK) are enriched in basic and acidic residues. The segment at 1–22 (MAEMKKTIDNKPAPKGEKKANR) is disordered.

It belongs to the NusB family.

Its function is as follows. Involved in transcription antitermination. Required for transcription of ribosomal RNA (rRNA) genes. Binds specifically to the boxA antiterminator sequence of the ribosomal RNA (rrn) operons. The chain is Transcription antitermination protein NusB from Rhodopseudomonas palustris (strain BisB18).